The primary structure comprises 390 residues: Neuromedin-B receptor (390 aa).

Residues 1-44 (MPPKSLSNLSQTAGVNQSGFFPGASERDFLPATDRTTAEFVIRC) lie on the Extracellular side of the membrane. N-linked (GlcNAc...) asparagine glycans are attached at residues Asn-8 and Asn-16. Residues 45–65 (VIPSLYLLIITVGLLGNIVLV) traverse the membrane as a helical segment. The Cytoplasmic segment spans residues 66–76 (KIFLTNSAMRS). A helical membrane pass occupies residues 77–97 (VPNIFISNLAAGDVLLLLTCV). The Extracellular portion of the chain corresponds to 98–117 (PVDASRYFLDEWMFGKVGCK). Cys-116 and Cys-198 form a disulfide bridge. The chain crosses the membrane as a helical span at residues 118-138 (LIPVIQLTSVGVSVFTLTALS). The Cytoplasmic portion of the chain corresponds to 139–155 (ADRYRAIVNPMDIQTSG). A helical membrane pass occupies residues 156–176 (AVLWTCVKAGGIWVVSVLLAV). Over 177–210 (PEAVFSEVARIDGLDNGSFTACIPYPQTDELHPK) the chain is Extracellular. Asn-192 carries an N-linked (GlcNAc...) asparagine glycan. Residues 211–231 (IHSVLIFLVYFLIPLGIISVY) form a helical membrane-spanning segment. Topologically, residues 232 to 266 (YYHIAKTLIKSAHNLPGEYNEHTKKQMETRKRLAK) are cytoplasmic. The chain crosses the membrane as a helical span at residues 267–287 (IVLVFVGCFVFCWFPNHILYM). Over 288-305 (YRSFNYNEIDPSLGHMIV) the chain is Extracellular. The chain crosses the membrane as a helical span at residues 306–328 (TLVARVLSFCNSCVNPFALYLLS). Topologically, residues 329–390 (ESFRKHFNNQ…GHSVKQEMAL (62 aa)) are cytoplasmic. Cys-341 carries the S-palmitoyl cysteine lipid modification. Residue Ser-352 is modified to Phosphoserine.

Belongs to the G-protein coupled receptor 1 family. As to expression, highly expressed in peripheral tissues where it is detected in the respiratory system, circulatory system, digestive system, urogenital system, lymphatic organs and endocrine system (at protein level). In the testis, expressed mainly in Leydig cells (at protein level).

The protein resides in the cell membrane. Functionally, receptor for neuromedin-B. Contributes to the maintenance of basal sigh rate through signaling in the pre-Botzinger complex, a cluster of several thousand neurons in the ventrolateral medulla responsible for inspiration during respiratory activity. Contributes to the induction of sneezing following exposure to chemical irritants or allergens which causes release of NMB by nasal sensory neurons and activation of NMBR-expressing neurons in the sneeze-evoking region of the brainstem. These in turn activate neurons of the caudal ventral respiratory group, giving rise to the sneezing response. Contributes to induction of acute itch, possibly through its activation on dorsal root ganglion neurons by the NMB peptide. Plays a role in the innate immune response to influenza A virus infection by enhancing interferon alpha expression and reducing expression of IL6. Plays a role in CSF1-induced proliferation of osteoclast precursors by contributing to the positive regulation of the expression of the CSF1 receptor CSF1R. The polypeptide is Neuromedin-B receptor (NMBR) (Sus scrofa (Pig)).